A 354-amino-acid chain; its full sequence is CX3C chemokine receptor 1 (354 aa).

Residues 1 to 32 (MPTSFPELDLENFEYDDSAEACYLGDIVAFGT) are Extracellular-facing. A helical membrane pass occupies residues 33 to 60 (IFLSIFYSLVFTFGLVGNLLVVLALTNS). The Cytoplasmic segment spans residues 61 to 70 (RKSKSITDIY). The helical transmembrane segment at 71 to 91 (LLNLALSDLLFVATLPFWTHY) threads the bilayer. At 92-104 (LISHEGLHNAMCK) the chain is on the extracellular side. A disulfide bridge links Cys-103 with Cys-176. The chain crosses the membrane as a helical span at residues 105-126 (LTTAFFFIGFFGGIFFITVISI). At 127–143 (DRYLAIVLAANSMNNRT) the chain is on the cytoplasmic side. Residues 144–168 (VQHGVTISLGVWAAAILVASPQFMF) form a helical membrane-spanning segment. Over 169-196 (TKRKDNECLGDYPEVLQEIWPVLRNSEV) the chain is Extracellular. Residues 197 to 216 (NILGFVLPLLIMSFCYFRIV) traverse the membrane as a helical segment. Residues 217–232 (RTLFSCKNRKKARAIR) lie on the Cytoplasmic side of the membrane. The chain crosses the membrane as a helical span at residues 233 to 257 (LILLVVVVFFLFWTPYNIVIFLETL). The Extracellular segment spans residues 258 to 274 (KFYNFFPSCGMKRDLRW). Residues 275–298 (ALSVTETVAFSHCCLNPFIYAFAG) form a helical membrane-spanning segment. At 299–354 (EKFRRYLRHLYNKCLAVLCGRPVHAGFSTESQRSRQDSILSSLTHYTSEGEGSLLL) the chain is on the cytoplasmic side. Thr-345 carries the post-translational modification Phosphothreonine.

It belongs to the G-protein coupled receptor 1 family. In terms of assembly, found in a ternary complex with CX3CL1 and ITGAV:ITGB3 or ITGA4:ITGB1. This protein is not N-glycosylated which is unusual for G-protein-coupled receptors. In terms of tissue distribution, most abundant in adult spinal cord, brain, kidney, gut, uterus and testes.

It is found in the cell membrane. In terms of biological role, receptor for the C-X3-C chemokine fractalkine (CX3CL1) present on many early leukocyte cells; CX3CR1-CX3CL1 signaling exerts distinct functions in different tissue compartments, such as immune response, inflammation, cell adhesion and chemotaxis. CX3CR1-CX3CL1 signaling mediates cell migratory functions. Responsible for the recruitment of natural killer (NK) cells to inflamed tissues. Acts as a regulator of inflammation process leading to atherogenesis by mediating macrophage and monocyte recruitment to inflamed atherosclerotic plaques, promoting cell survival. Involved in airway inflammation by promoting interleukin 2-producing T helper (Th2) cell survival in inflamed lung. Involved in the migration of circulating monocytes to non-inflamed tissues, where they differentiate into macrophages and dendritic cells. Acts as a negative regulator of angiogenesis, probably by promoting macrophage chemotaxis. Plays a key role in brain microglia by regulating inflammatory response in the central nervous system (CNS) and regulating synapse maturation. Required to restrain the microglial inflammatory response in the CNS and the resulting parenchymal damage in response to pathological stimuli. Involved in brain development by participating in synaptic pruning, a natural process during which brain microglia eliminates extra synapses during postnatal development. Synaptic pruning by microglia is required to promote the maturation of circuit connectivity during brain development. Acts as an important regulator of the gut microbiota by controlling immunity to intestinal bacteria and fungi. Expressed in lamina propria dendritic cells in the small intestine, which form transepithelial dendrites capable of taking up bacteria in order to provide defense against pathogenic bacteria. Required to initiate innate and adaptive immune responses against dissemination of commensal fungi (mycobiota) component of the gut: expressed in mononuclear phagocytes (MNPs) and acts by promoting induction of antifungal IgG antibodies response to confer protection against disseminated C.albicans or C.auris infection. Also acts as a receptor for C-C motif chemokine CCL26, inducing cell chemotaxis. This Rattus norvegicus (Rat) protein is CX3C chemokine receptor 1.